The following is a 579-amino-acid chain: Effector protein HopAB3 (579 aa).

3 disordered regions span residues 1–140 (MAGI…TGAV), 214–294 (VRQQ…NQVP), and 384–408 (PARA…PDSA). A host recognition; Pto interaction region spans residues 1–336 (MAGINGAGPS…LRAALERHIL (336 aa)). Low complexity-rich tracts occupy residues 23–39 (ASGG…SSNS), 89–101 (RPQE…APQA), 219–248 (ASAP…ESSS), 266–281 (NQRR…ASQR), and 384–402 (PARA…ATVS). The E3 ubiquitin-protein ligase stretch occupies residues 337-579 (HRRPIPMDIA…IAKYAFRIVP (243 aa)).

It belongs to the HopAB family. Interacts physically with plant cell Pto. Auto-ubiquitinated.

Its subcellular location is the secreted. In terms of biological role, effector protein involved in gene-for-gene resistance in tomato plants. It is recognized by the host Pto resistance protein and elicits Pto and Prf-dependent hypersensitive response (HR) and programmed cell death (PCD), resulting in host immunity. In susceptible plants, acts as a virulence factor by suppressing PCD and HR-based plant immunity. This function requires its E3 ubiquitin ligase activity probably by recruiting E2 enzymes and transferring ubiquitin molecules to cellular proteins involved in regulation of PCD and targeting them for degradation. Enhances the development of disease symptoms and bacterial growth. This is Effector protein HopAB3 (hopAB3) from Pseudomonas syringae pv. tomato.